A 302-amino-acid chain; its full sequence is 4-hydroxy-tetrahydrodipicolinate synthase (302 aa).

T56 contacts pyruvate. Residue Y145 is the Proton donor/acceptor of the active site. Catalysis depends on K173, which acts as the Schiff-base intermediate with substrate. Residue V215 coordinates pyruvate.

This sequence belongs to the DapA family. Homotetramer; dimer of dimers.

It is found in the cytoplasm. The catalysed reaction is L-aspartate 4-semialdehyde + pyruvate = (2S,4S)-4-hydroxy-2,3,4,5-tetrahydrodipicolinate + H2O + H(+). The protein operates within amino-acid biosynthesis; L-lysine biosynthesis via DAP pathway; (S)-tetrahydrodipicolinate from L-aspartate: step 3/4. Functionally, catalyzes the condensation of (S)-aspartate-beta-semialdehyde [(S)-ASA] and pyruvate to 4-hydroxy-tetrahydrodipicolinate (HTPA). The chain is 4-hydroxy-tetrahydrodipicolinate synthase from Prochlorococcus marinus (strain MIT 9515).